The primary structure comprises 431 residues: Serine--tRNA ligase (431 aa).

Position 237 to 239 (237 to 239 (TAE)) interacts with L-serine. Position 268–270 (268–270 (RSE)) interacts with ATP. Position 291 (Glu291) interacts with L-serine. Residue 355–358 (EISS) participates in ATP binding. Ser390 contributes to the L-serine binding site.

It belongs to the class-II aminoacyl-tRNA synthetase family. Type-1 seryl-tRNA synthetase subfamily. Homodimer. The tRNA molecule binds across the dimer.

The protein localises to the cytoplasm. The catalysed reaction is tRNA(Ser) + L-serine + ATP = L-seryl-tRNA(Ser) + AMP + diphosphate + H(+). The enzyme catalyses tRNA(Sec) + L-serine + ATP = L-seryl-tRNA(Sec) + AMP + diphosphate + H(+). Its pathway is aminoacyl-tRNA biosynthesis; selenocysteinyl-tRNA(Sec) biosynthesis; L-seryl-tRNA(Sec) from L-serine and tRNA(Sec): step 1/1. Its function is as follows. Catalyzes the attachment of serine to tRNA(Ser). Is also able to aminoacylate tRNA(Sec) with serine, to form the misacylated tRNA L-seryl-tRNA(Sec), which will be further converted into selenocysteinyl-tRNA(Sec). The protein is Serine--tRNA ligase of Neisseria gonorrhoeae (strain ATCC 700825 / FA 1090).